We begin with the raw amino-acid sequence, 106 residues long: Envelope small membrane protein (106 aa).

Residues Met1–Glu11 are Virion surface-facing. A helical membrane pass occupies residues Asn12–Gly32. The Intravirion portion of the chain corresponds to Arg33 to Thr106.

It belongs to the gammacoronaviruses E protein family. Homooligomer. Interacts with the M membrane protein in the budding compartment of the host cell, which is located between endoplasmic reticulum and the Golgi complex. The cytoplasmic tails of both proteins are important for this function. Interacts with Nucleoprotein.

The protein resides in the host Golgi apparatus membrane. Plays a central role in virus morphogenesis and assembly. Acts as a viroporin and self-assembles in host membranes forming pentameric protein-lipid pores that allow ion transport. Also plays a role in the induction of apoptosis. The chain is Envelope small membrane protein from Gallus gallus (Chicken).